The primary structure comprises 92 residues: UPF0235 protein CCA_00247 (92 aa).

This sequence belongs to the UPF0235 family.

The chain is UPF0235 protein CCA_00247 from Chlamydia caviae (strain ATCC VR-813 / DSM 19441 / 03DC25 / GPIC) (Chlamydophila caviae).